Consider the following 301-residue polypeptide: Phosphatidylserine decarboxylase proenzyme (301 aa).

Active-site charge relay system; for autoendoproteolytic cleavage activity residues include D117, H173, and S260. Catalysis depends on S260, which acts as the Schiff-base intermediate with substrate; via pyruvic acid; for decarboxylase activity. S260 is subject to Pyruvic acid (Ser); by autocatalysis.

Belongs to the phosphatidylserine decarboxylase family. PSD-B subfamily. Prokaryotic type II sub-subfamily. In terms of assembly, heterodimer of a large membrane-associated beta subunit and a small pyruvoyl-containing alpha subunit. The cofactor is pyruvate. Is synthesized initially as an inactive proenzyme. Formation of the active enzyme involves a self-maturation process in which the active site pyruvoyl group is generated from an internal serine residue via an autocatalytic post-translational modification. Two non-identical subunits are generated from the proenzyme in this reaction, and the pyruvate is formed at the N-terminus of the alpha chain, which is derived from the carboxyl end of the proenzyme. The autoendoproteolytic cleavage occurs by a canonical serine protease mechanism, in which the side chain hydroxyl group of the serine supplies its oxygen atom to form the C-terminus of the beta chain, while the remainder of the serine residue undergoes an oxidative deamination to produce ammonia and the pyruvoyl prosthetic group on the alpha chain. During this reaction, the Ser that is part of the protease active site of the proenzyme becomes the pyruvoyl prosthetic group, which constitutes an essential element of the active site of the mature decarboxylase.

It is found in the cell membrane. The enzyme catalyses a 1,2-diacyl-sn-glycero-3-phospho-L-serine + H(+) = a 1,2-diacyl-sn-glycero-3-phosphoethanolamine + CO2. It functions in the pathway phospholipid metabolism; phosphatidylethanolamine biosynthesis; phosphatidylethanolamine from CDP-diacylglycerol: step 2/2. Its function is as follows. Catalyzes the formation of phosphatidylethanolamine (PtdEtn) from phosphatidylserine (PtdSer). The protein is Phosphatidylserine decarboxylase proenzyme of Chlamydia muridarum (strain MoPn / Nigg).